The chain runs to 459 residues: Spermatogenesis-associated protein 1 (459 aa).

The span at 193–205 (LKELPNKNQEEAG) shows a compositional bias: basic and acidic residues. The segment at 193–213 (LKELPNKNQEEAGGKATAEKS) is disordered. 2 coiled-coil regions span residues 287–374 (TDIS…YKKL) and 400–453 (LIIQ…KKII).

In terms of assembly, interacts with IFT20.

The protein resides in the cytoplasmic vesicle. It is found in the secretory vesicle. It localises to the acrosome. The protein is Spermatogenesis-associated protein 1 (SPATA1) of Homo sapiens (Human).